Here is a 589-residue protein sequence, read N- to C-terminus: Cytochrome P450 monooxygenase TRI13 (589 aa).

The first 21 residues, 1 to 21 (MFLSLCLMVLALYLLYKWALP), serve as a signal peptide directing secretion. Residues Asn-52, Asn-219, Asn-243, and Asn-366 are each glycosylated (N-linked (GlcNAc...) asparagine). Cys-531 lines the heme pocket.

It belongs to the cytochrome P450 family. Heme serves as cofactor.

Its pathway is sesquiterpene biosynthesis; trichothecene biosynthesis. Functionally, cytochrome P450 monooxygenase; part of the core gene cluster that mediates the biosynthesis of trichothecenes, a very large family of chemically related bicyclic sesquiterpene compounds acting as mycotoxins, including T2-toxin. The biosynthesis of trichothecenes begins with the cyclization of farnesyl diphosphate to trichodiene and is catalyzed by the trichodiene synthase TRI5. Trichodiene undergoes a series of oxygenations catalyzed by the cytochrome P450 monooxygenase TRI4. TRI4 controls the addition of four oxygens at C-2, C-3, C-11, and the C-12, C-13-epoxide to form the intermediate isotrichotriol. Isotrichotriol then undergoes a non-enzymatic isomerization and cyclization to form isotrichodermol. During this process, the oxygen at the C-2 position becomes the pyran ring oxygen and the hydroxyl group at C-11 is lost. More complex type A trichothecenes are built by modifying isotrichodermol through a series of paired hydroxylation and acetylation or acylation steps. Isotrichodermol is converted to isotrichodermin by the acetyltransferase TRI101. TRI101 encodes a C-3 transacetylase that acts as a self-protection or resistance factor during biosynthesis and that the presence of a free C-3 hydroxyl group is a key component of Fusarium trichothecene phytotoxicity. A second hydroxyl group is added to C-15 by the trichothecene C-15 hydroxylase TRI11, producing 15-decalonectrin, which is then acetylated by TRI3, producing calonectrin. A third hydroxyl group is added at C-4 by the cytochrome P450 monooxygenase TRI13, converting calonectrin to 3,15-diacetoxyspirpenol, which is subsequently acetylated by the acetyltransferase TRI7. A fourth hydroxyl group is added to C-8 by the cytochrome P450 monooxygenase TRI1, followed by the addition of an isovaleryl moiety by TRI16. Finally, the acetyl group is removed from the C-3 position by the trichothecene C-3 esterase TRI8 to produce T-2 toxin. This chain is Cytochrome P450 monooxygenase TRI13, found in Fusarium sporotrichioides.